We begin with the raw amino-acid sequence, 186 residues long: MKTAHELRPGNVIMLDGSPWVVQKTETTRSGRNAAIVKLKLKHVLQDSSTESTFKGEDKMEDIILERLDCTYSYFADPMYVFMDAEYNQYDVEAENLGDAAAYIVDGMEENCQVTFYEGKAISVELPTSVVREVTYTEPSARGDTSGKVMKPATITGGGTLSVADFVKTGDMIEIDTRTNEFKKRV.

It belongs to the elongation factor P family.

It localises to the cytoplasm. The protein operates within protein biosynthesis; polypeptide chain elongation. In terms of biological role, involved in peptide bond synthesis. Stimulates efficient translation and peptide-bond synthesis on native or reconstituted 70S ribosomes in vitro. Probably functions indirectly by altering the affinity of the ribosome for aminoacyl-tRNA, thus increasing their reactivity as acceptors for peptidyl transferase. This Shewanella halifaxensis (strain HAW-EB4) protein is Elongation factor P.